Here is an 86-residue protein sequence, read N- to C-terminus: Large ribosomal subunit protein bL27 (86 aa).

A disordered region spans residues 1-24; it reads MAHKKAGGSTRNGRDSESKRLGVK.

Belongs to the bacterial ribosomal protein bL27 family.

The sequence is that of Large ribosomal subunit protein bL27 from Alcanivorax borkumensis (strain ATCC 700651 / DSM 11573 / NCIMB 13689 / SK2).